Consider the following 238-residue polypeptide: Probable transcriptional regulatory protein YeeN (238 aa).

This sequence belongs to the TACO1 family. YeeN subfamily.

It is found in the cytoplasm. The chain is Probable transcriptional regulatory protein YeeN from Shigella flexneri.